Reading from the N-terminus, the 99-residue chain is Plastocyanin (99 aa).

In terms of domain architecture, Plastocyanin-like spans 1–99 (VEVLMGGSGG…IGMSGIVTVN (99 aa)). Cu cation is bound by residues H37, C84, H87, and M92.

It belongs to the plastocyanin family. Cu(2+) serves as cofactor.

It localises to the plastid. It is found in the chloroplast thylakoid membrane. Participates in electron transfer between P700 and the cytochrome b6-f complex in photosystem I. The polypeptide is Plastocyanin (PETE) (Ginkgo biloba (Ginkgo)).